The sequence spans 325 residues: D-alanine--D-alanine ligase (325 aa).

An ATP-grasp domain is found at 102 to 300 (KQIFRAAGIP…FTELVERMLQ (199 aa)). Residue 130 to 185 (AAELGSPLVIKPSNNGSTVGISIVRDERSFAQGLELARSVSSRIFLERYVPGKEIT) participates in ATP binding. Mg(2+) contacts are provided by D254, E267, and N269.

It belongs to the D-alanine--D-alanine ligase family. It depends on Mg(2+) as a cofactor. Mn(2+) is required as a cofactor.

The protein localises to the cytoplasm. The enzyme catalyses 2 D-alanine + ATP = D-alanyl-D-alanine + ADP + phosphate + H(+). The protein operates within cell wall biogenesis; peptidoglycan biosynthesis. In terms of biological role, cell wall formation. This Synechococcus sp. (strain JA-2-3B'a(2-13)) (Cyanobacteria bacterium Yellowstone B-Prime) protein is D-alanine--D-alanine ligase.